Reading from the N-terminus, the 525-residue chain is GMP synthase [glutamine-hydrolyzing] (525 aa).

One can recognise a Glutamine amidotransferase type-1 domain in the interval 8 to 206 (PLLILDFGSQ…VVDICKASTD (199 aa)). Residue Cys-85 is the Nucleophile of the active site. Catalysis depends on residues His-180 and Glu-182. Residues 207-400 (WTPEHIIDEA…LGLPHDMVYR (194 aa)) form the GMPS ATP-PPase domain. 234–240 (SGGVDSS) lines the ATP pocket.

In terms of assembly, homodimer.

The catalysed reaction is XMP + L-glutamine + ATP + H2O = GMP + L-glutamate + AMP + diphosphate + 2 H(+). Its pathway is purine metabolism; GMP biosynthesis; GMP from XMP (L-Gln route): step 1/1. Catalyzes the synthesis of GMP from XMP. The sequence is that of GMP synthase [glutamine-hydrolyzing] from Legionella pneumophila (strain Lens).